The chain runs to 121 residues: uncharacterized protein (121 aa).

This is an uncharacterized protein from Saccharomyces cerevisiae (strain ATCC 204508 / S288c) (Baker's yeast).